The following is a 311-amino-acid chain: Nudix hydrolase 9 (311 aa).

The Nudix hydrolase domain occupies 131-298; the sequence is SSPLGNGAVI…GFALYELMLQ (168 aa). The Nudix box signature appears at 192–213; it reads LNKKVTQEMFDSIICEVVEETG. Residues E207 and E211 each contribute to the Mg(2+) site.

It belongs to the Nudix hydrolase family. Mg(2+) is required as a cofactor. Requires Mn(2+) as cofactor. In terms of tissue distribution, expressed in roots, stems and leaves.

Functionally, probably mediates the hydrolysis of some nucleoside diphosphate derivatives. The sequence is that of Nudix hydrolase 9 (NUDT9) from Arabidopsis thaliana (Mouse-ear cress).